Consider the following 719-residue polypeptide: MYNFLSCKKKSIILQVLLIICTYNILLNFVNIFVNNNEKNHKNKYENRIKSFYVEAYNWNFLEKWKSINTNEKLEYKINYNIGLNIDAEIGDFGDYNSDVKTDLILFKYDKDKLLSTIFIYVFSVKENKFIYHTEVSFEGKIMNVTAIDLNFDGALDVLVLFKDNKDSSKSNKYYVAAFLQNDNDQLEEIWNSKKKEQNDESITDNEEDNIYYTNIHPLICDINNDGLPDIIGQQSGGPDGFFRFIWINTRNGFKSFLWKNINIFKYSELDEITNPNSSAIVDINGDCKSDLVFTVYNSYEKRIGLEIWLNKIIDGKSFYVKYSQDYLLPPNSLQVLFGDFNGDGSIDLVVPTCVKSSFCNYCCVSDDKIYFIPNIQKKICDSSWKKPDETKCRPASNLCSESDFEFQQNLTDDFISVVDTSGLHLSGNADYPYYLSVGDIDDDGYLDLLITLKNDKGQKYVRIYKNELKIHYEENSLEVRGFYNFYQFVTSPEESVTDVYNAAFFDIFENGVLDILIFGKYITSNKKTKYAAVGFIRNNETDSLFLKSTALNGICVNDCYKEKDKITTKTLGGNAHGPTFKITVIDVNGVKSSRIGVQKSQSAHFPLQLPYVLFGLGRTSNYVEEFYVGMPTHEQKYYNMWVSIIPNSHIIVIPYPLNNSNKWQIQLSVNPSKKFYSILYITLICLSVIGVLIFILDRKEKVEDSKEELGFKSHFVIG.

The first 32 residues, 1-32, serve as a signal peptide directing secretion; it reads MYNFLSCKKKSIILQVLLIICTYNILLNFVNI. The Extracellular segment spans residues 33–677; sequence FVNNNEKNHK…LSVNPSKKFY (645 aa). Residues Asn144, Asn277, Asn410, Asn540, and Asn659 are each glycosylated (N-linked (GlcNAc...) asparagine). A helical membrane pass occupies residues 678–697; it reads SILYITLICLSVIGVLIFIL. The Cytoplasmic portion of the chain corresponds to 698–719; sequence DRKEKVEDSKEELGFKSHFVIG.

The protein belongs to the TIP family.

The protein localises to the membrane. Functionally, may protect the parasite against attack by the host immune system by immunomodulation. This Plasmodium falciparum (isolate 3D7) protein is T-cell immunomodulatory protein homolog.